A 192-amino-acid chain; its full sequence is Flavin prenyltransferase UbiX (192 aa).

Residues 10–12 (GAS), serine 36, 92–95 (SVAT), and arginine 127 contribute to the FMN site. Residues tyrosine 157 and lysine 173 each contribute to the dimethylallyl phosphate site.

The protein belongs to the UbiX/PAD1 family.

It carries out the reaction dimethylallyl phosphate + FMNH2 = prenylated FMNH2 + phosphate. Flavin prenyltransferase that catalyzes the synthesis of the prenylated FMN cofactor (prenyl-FMN) for 4-hydroxy-3-polyprenylbenzoic acid decarboxylase UbiD. The prenyltransferase is metal-independent and links a dimethylallyl moiety from dimethylallyl monophosphate (DMAP) to the flavin N5 and C6 atoms of FMN. The protein is Flavin prenyltransferase UbiX of Chlamydia muridarum (strain MoPn / Nigg).